Here is a 267-residue protein sequence, read N- to C-terminus: tRNA pseudouridine synthase A (267 aa).

The Nucleophile role is filled by Asp54. Tyr114 contacts substrate.

It belongs to the tRNA pseudouridine synthase TruA family. Homodimer.

It carries out the reaction uridine(38/39/40) in tRNA = pseudouridine(38/39/40) in tRNA. Formation of pseudouridine at positions 38, 39 and 40 in the anticodon stem and loop of transfer RNAs. This chain is tRNA pseudouridine synthase A, found in Tropheryma whipplei (strain Twist) (Whipple's bacillus).